The chain runs to 313 residues: Secreted mono- and diacylglycerol lipase MDL5 (313 aa).

Positions 1-20 are cleaved as a signal peptide; it reads MQLQYVLTLLWIIFAQNVFS. The cysteines at positions 66 and 306 are disulfide-linked. Asn72 and Asn111 each carry an N-linked (GlcNAc...) asparagine glycan. Ser180 functions as the Nucleophile in the catalytic mechanism. Residue Asp238 is part of the active site. Asn263 carries N-linked (GlcNAc...) asparagine glycosylation. His290 is a catalytic residue.

This sequence belongs to the AB hydrolase superfamily. Lipase family. Class 3 subfamily.

Its subcellular location is the secreted. It localises to the cell wall. The catalysed reaction is a monoacylglycerol + H2O = glycerol + a fatty acid + H(+). The enzyme catalyses a diacylglycerol + H2O = a monoacylglycerol + a fatty acid + H(+). Its function is as follows. Secreted lipase involved in Dandruff and seborrheic dermatitis (D/SD) probably via lipase-mediated breakdown of sebaceous lipids and release of irritating free fatty acids. Shows activity against monoglyceride and diglyceride substrates, but not triglyceride substrates and does not exhibit regio-selective production of diacylglycerols. Cleaves oleic acid from 1,2 isomers of diolein on both the 1 and the 2 position of the glycerol backbone, resulting mainly in free fatty acids but no monoolein is detected. Shows activity on monoolein and liberates mostly free fatty acids, but can also perform the reverse reaction and produce diolein. In Malassezia globosa (strain ATCC MYA-4612 / CBS 7966) (Dandruff-associated fungus), this protein is Secreted mono- and diacylglycerol lipase MDL5.